The following is a 98-amino-acid chain: MAEKLDDAARAKAVASLADSGWEDVQGRDAIHKTFVFKNFTRAFGWMTQVAIVAEKMDHHPEWSNVYKTVEVTLATHDVGGLSELDVTLAQKMDRLAQ.

Belongs to the pterin-4-alpha-carbinolamine dehydratase family.

It catalyses the reaction (4aS,6R)-4a-hydroxy-L-erythro-5,6,7,8-tetrahydrobiopterin = (6R)-L-erythro-6,7-dihydrobiopterin + H2O. This Jannaschia sp. (strain CCS1) protein is Putative pterin-4-alpha-carbinolamine dehydratase.